Reading from the N-terminus, the 120-residue chain is Holo-[acyl-carrier-protein] synthase (120 aa).

Aspartate 6 and glutamate 55 together coordinate Mg(2+).

This sequence belongs to the P-Pant transferase superfamily. AcpS family. The cofactor is Mg(2+).

It is found in the cytoplasm. The catalysed reaction is apo-[ACP] + CoA = holo-[ACP] + adenosine 3',5'-bisphosphate + H(+). Functionally, transfers the 4'-phosphopantetheine moiety from coenzyme A to a Ser of acyl-carrier-protein. The protein is Holo-[acyl-carrier-protein] synthase of Pelodictyon phaeoclathratiforme (strain DSM 5477 / BU-1).